The chain runs to 231 residues: Phosphoglycolate phosphatase, plasmid (231 aa).

Asp14 functions as the Nucleophile in the catalytic mechanism. 3 residues coordinate Mg(2+): Asp14, Asp16, and Asp175.

It belongs to the HAD-like hydrolase superfamily. CbbY/CbbZ/Gph/YieH family. As to quaternary structure, homotrimer. It depends on Mg(2+) as a cofactor.

It catalyses the reaction 2-phosphoglycolate + H2O = glycolate + phosphate. It functions in the pathway organic acid metabolism; glycolate biosynthesis; glycolate from 2-phosphoglycolate: step 1/1. Its function is as follows. Specifically catalyzes the dephosphorylation of 2-phosphoglycolate. Is involved in the dissimilation of the intracellular 2-phosphoglycolate formed during the DNA repair of 3'-phosphoglycolate ends, a major class of DNA lesions induced by oxidative stress. The sequence is that of Phosphoglycolate phosphatase, plasmid (cbbZP) from Cupriavidus necator (strain ATCC 17699 / DSM 428 / KCTC 22496 / NCIMB 10442 / H16 / Stanier 337) (Ralstonia eutropha).